We begin with the raw amino-acid sequence, 436 residues long: Trigger factor (436 aa).

The 86-residue stretch at Gly-164 to Pro-249 folds into the PPIase FKBP-type domain.

Belongs to the FKBP-type PPIase family. Tig subfamily.

Its subcellular location is the cytoplasm. It catalyses the reaction [protein]-peptidylproline (omega=180) = [protein]-peptidylproline (omega=0). Its function is as follows. Involved in protein export. Acts as a chaperone by maintaining the newly synthesized protein in an open conformation. Functions as a peptidyl-prolyl cis-trans isomerase. The chain is Trigger factor from Limosilactobacillus reuteri (strain DSM 20016) (Lactobacillus reuteri).